The primary structure comprises 154 residues: Prefoldin subunit alpha (154 aa).

The interval 123-154 (EAEQLEQQAQQAQQQMMQQQMQAQQQPQDGEQ) is disordered. Residues 127 to 154 (LEQQAQQAQQQMMQQQMQAQQQPQDGEQ) show a composition bias toward low complexity.

It belongs to the prefoldin alpha subunit family. As to quaternary structure, heterohexamer of two alpha and four beta subunits.

It is found in the cytoplasm. Functionally, molecular chaperone capable of stabilizing a range of proteins. Seems to fulfill an ATP-independent, HSP70-like function in archaeal de novo protein folding. In Halobacterium salinarum (strain ATCC 29341 / DSM 671 / R1), this protein is Prefoldin subunit alpha.